The chain runs to 458 residues: Argininosuccinate lyase (458 aa).

Belongs to the lyase 1 family. Argininosuccinate lyase subfamily.

The protein resides in the cytoplasm. The catalysed reaction is 2-(N(omega)-L-arginino)succinate = fumarate + L-arginine. The protein operates within amino-acid biosynthesis; L-arginine biosynthesis; L-arginine from L-ornithine and carbamoyl phosphate: step 3/3. The chain is Argininosuccinate lyase from Heliobacterium mobile (Heliobacillus mobilis).